The following is a 150-amino-acid chain: Large ribosomal subunit protein bL9 (150 aa).

It belongs to the bacterial ribosomal protein bL9 family.

Its function is as follows. Binds to the 23S rRNA. The chain is Large ribosomal subunit protein bL9 from Enterococcus faecalis (strain ATCC 700802 / V583).